Consider the following 218-residue polypeptide: Small ribosomal subunit protein uS3c (218 aa).

The region spanning 39 to 118 is the KH type-2 domain; sequence IRNFIKNYVQ…KLNIAITRIA (80 aa).

This sequence belongs to the universal ribosomal protein uS3 family. In terms of assembly, part of the 30S ribosomal subunit.

The protein localises to the plastid. Its subcellular location is the chloroplast. The protein is Small ribosomal subunit protein uS3c (rps3) of Ipomoea purpurea (Common morning glory).